We begin with the raw amino-acid sequence, 88 residues long: Sapecin-B (88 aa).

An N-terminal signal peptide occupies residues 1–24 (MKFLTSLLLLFVVVMVSAVNLSMA). The propeptide occupies 25–54 (KESANQLTERLQELDGAAIQEPAELNRHKR). Intrachain disulfides connect Cys57-Cys78, Cys64-Cys84, and Cys68-Cys86.

Belongs to the invertebrate defensin family. Type 1 subfamily. In terms of tissue distribution, hemocytes and fat body.

It is found in the secreted. Its function is as follows. Sapecins, which are potent bactericidal proteins, are produced in response to injury. Sapecin B is cytotoxic to Gram-positive bacteria. The sequence is that of Sapecin-B from Sarcophaga peregrina (Flesh fly).